The chain runs to 145 residues: Venom protein 30.1 (145 aa).

Residues 1-18 (MIIVKLFTCLLMVSSVLT) form the signal peptide.

In terms of processing, contains 5 disulfide bonds. In terms of tissue distribution, expressed by the venom gland.

The protein resides in the secreted. This chain is Venom protein 30.1, found in Lychas mucronatus (Chinese swimming scorpion).